Reading from the N-terminus, the 135-residue chain is Small ribosomal subunit protein bS16m (135 aa).

The transit peptide at 1 to 34 (MVQLTTVLCKAYRGGHLTIRLALGGCTNRPFYRI) directs the protein to the mitochondrion. A Phosphothreonine modification is found at Thr-130.

It belongs to the bacterial ribosomal protein bS16 family. Component of the mitochondrial ribosome small subunit (28S) which comprises a 12S rRNA and about 30 distinct proteins.

The protein localises to the mitochondrion. This is Small ribosomal subunit protein bS16m (MRPS16) from Bos taurus (Bovine).